The chain runs to 419 residues: Glutamate-1-semialdehyde 2,1-aminomutase (419 aa).

An N6-(pyridoxal phosphate)lysine modification is found at Lys-259.

It belongs to the class-III pyridoxal-phosphate-dependent aminotransferase family. HemL subfamily. The cofactor is pyridoxal 5'-phosphate.

Its subcellular location is the cytoplasm. It carries out the reaction (S)-4-amino-5-oxopentanoate = 5-aminolevulinate. It participates in porphyrin-containing compound metabolism; protoporphyrin-IX biosynthesis; 5-aminolevulinate from L-glutamyl-tRNA(Glu): step 2/2. This is Glutamate-1-semialdehyde 2,1-aminomutase (hemL) from Sulfurisphaera tokodaii (strain DSM 16993 / JCM 10545 / NBRC 100140 / 7) (Sulfolobus tokodaii).